The sequence spans 724 residues: RINT1-like protein (724 aa).

The 562-residue stretch at Arg163–Phe724 folds into the RINT1/TIP20 domain.

Belongs to the RINT1 family.

Its function is as follows. During cytokinesis in male meiotic cells, required for completion of cleavage furrow ingression possibly in conjunction with Zw10. Required for maintenance of Golgi stack number and morphology. Essential for acroblast assembly. The chain is RINT1-like protein from Drosophila melanogaster (Fruit fly).